Consider the following 134-residue polypeptide: Protein NrdI (134 aa).

The protein belongs to the NrdI family.

Probably involved in ribonucleotide reductase function. The polypeptide is Protein NrdI (Yersinia pseudotuberculosis serotype O:1b (strain IP 31758)).